The following is a 435-amino-acid chain: Serine--tRNA ligase (435 aa).

239–241 (TAE) lines the L-serine pocket. 270–272 (RAE) is an ATP binding site. Glutamate 293 contacts L-serine. 357-360 (EISS) contacts ATP. Serine 393 lines the L-serine pocket.

This sequence belongs to the class-II aminoacyl-tRNA synthetase family. Type-1 seryl-tRNA synthetase subfamily. In terms of assembly, homodimer. The tRNA molecule binds across the dimer.

The protein localises to the cytoplasm. It carries out the reaction tRNA(Ser) + L-serine + ATP = L-seryl-tRNA(Ser) + AMP + diphosphate + H(+). The catalysed reaction is tRNA(Sec) + L-serine + ATP = L-seryl-tRNA(Sec) + AMP + diphosphate + H(+). It participates in aminoacyl-tRNA biosynthesis; selenocysteinyl-tRNA(Sec) biosynthesis; L-seryl-tRNA(Sec) from L-serine and tRNA(Sec): step 1/1. Functionally, catalyzes the attachment of serine to tRNA(Ser). Is also able to aminoacylate tRNA(Sec) with serine, to form the misacylated tRNA L-seryl-tRNA(Sec), which will be further converted into selenocysteinyl-tRNA(Sec). This is Serine--tRNA ligase from Parvibaculum lavamentivorans (strain DS-1 / DSM 13023 / NCIMB 13966).